The sequence spans 156 residues: Sperm acrosome-associated protein 5 (156 aa).

The first 18 residues, 1–18, serve as a signal peptide directing secretion; that stretch reads MQVSGTIVVILMAANVEA. Residues 19-147 enclose the C-type lysozyme domain; that stretch reads KIYERCDLAK…SEWLRGCHMN (129 aa). Disulfide bonds link C24–C144, C48–C132, C82–C97, and C93–C111. The active site involves E53.

The protein belongs to the glycosyl hydrolase 22 family.

It localises to the secreted. It carries out the reaction Hydrolysis of (1-&gt;4)-beta-linkages between N-acetylmuramic acid and N-acetyl-D-glucosamine residues in a peptidoglycan and between N-acetyl-D-glucosamine residues in chitodextrins.. This chain is Sperm acrosome-associated protein 5 (SPACA5), found in Bos taurus (Bovine).